We begin with the raw amino-acid sequence, 506 residues long: MEHESFKASERLVTPAYIRQGREARRMHEQLVRQLVEQGKCPKEPWDESTIEIFLNELAVMDSNNFLGNCGVGEREGRVASGMVSRRHYRLIHGIGRSGDISAIQPKAAGSSVLNKLTNSMVLDIIRLAGVRTASSCFVVPMATGMSLTLCFLTLRHKRPKAKYIIWPRIDQKSCFKSMITAGFEPVVIENVLEGDELRTDLDAVEAKITELGAENILCVHSTTSCFAPRVPDRVEELAVICKKYEIPHVVNNAYGVQSSKCMHLIQQGARVGRIDAFVQSLDKNFMVPVGGAVIAGFSDSFVQEISKMYPGRASASPSLDVLITLLSLGASGYNKLLKERKEMFVYLSSELKKLAKELNERLLETPHNPISLALSLTSLSEQSGSAVTQLGSMLFTRQVSGARVVPLGTSQTINGYVFKGFMSHSNNYPCAYLNAASAICIKKQDVDMFIKRLDKCLRLCKKEKHLAKDEPRCAQQTTEDDVAELAQGLGDVLQGETASELLLSG.

The tract at residues Met-1 to Glu-44 is tetramerization. Arg-75 is a pyridoxal 5'-phosphate binding site. The segment at Gly-96–Pro-106 is phosphate loop (P-loop). Residues Arg-97, Ser-98, and Gln-105 each coordinate substrate. Arg-271 lines the tRNA pocket. At Lys-284 the chain carries N6-(pyridoxal phosphate)lysine. Arg-313 is a substrate binding site. TRNA contacts are provided by Arg-398 and Lys-463.

Belongs to the SepSecS family. As to quaternary structure, homotetramer formed by a catalytic dimer and a non-catalytic dimer serving as a binding platform that orients tRNASec for catalysis. Each tetramer binds the CCA ends of two tRNAs which point to the active sites of the catalytic dimer. Requires pyridoxal 5'-phosphate as cofactor.

The protein resides in the cytoplasm. The enzyme catalyses O-phospho-L-seryl-tRNA(Sec) + selenophosphate + H2O = L-selenocysteinyl-tRNA(Sec) + 2 phosphate. It participates in aminoacyl-tRNA biosynthesis; selenocysteinyl-tRNA(Sec) biosynthesis; selenocysteinyl-tRNA(Sec) from L-seryl-tRNA(Sec) (archaeal/eukaryal route): step 2/2. In terms of biological role, converts O-phosphoseryl-tRNA(Sec) to selenocysteinyl-tRNA(Sec) required for selenoprotein biosynthesis. The sequence is that of O-phosphoseryl-tRNA(Sec) selenium transferase (sepsecs) from Xenopus tropicalis (Western clawed frog).